The primary structure comprises 231 residues: Floral homeotic protein PMADS 1 (231 aa).

In terms of domain architecture, MADS-box spans 3 to 58; it reads RGKIQIKRIENQTNRQVTYSKRRNGLFKKANELTVLCDAKVSIIMISSTGKLHEFI. A K-box domain is found at 84-174; it reads YEKMQEQLRK…LLEFDARQED (91 aa).

Predominantly expressed in petals and stamens, less in carpels and sepals.

It localises to the nucleus. Transcription factor involved in the genetic control of flower development. Necessary for the normal development of petals. Absence of the PMADS1 protein causes transformation of petals into sepals. The polypeptide is Floral homeotic protein PMADS 1 (PMADS1) (Petunia hybrida (Petunia)).